A 319-amino-acid polypeptide reads, in one-letter code: Acetyl-coenzyme A carboxylase carboxyl transferase subunit alpha (319 aa).

In terms of domain architecture, CoA carboxyltransferase C-terminal spans R39–E293.

The protein belongs to the AccA family. As to quaternary structure, acetyl-CoA carboxylase is a heterohexamer composed of biotin carboxyl carrier protein (AccB), biotin carboxylase (AccC) and two subunits each of ACCase subunit alpha (AccA) and ACCase subunit beta (AccD).

The protein localises to the cytoplasm. It carries out the reaction N(6)-carboxybiotinyl-L-lysyl-[protein] + acetyl-CoA = N(6)-biotinyl-L-lysyl-[protein] + malonyl-CoA. Its pathway is lipid metabolism; malonyl-CoA biosynthesis; malonyl-CoA from acetyl-CoA: step 1/1. Functionally, component of the acetyl coenzyme A carboxylase (ACC) complex. First, biotin carboxylase catalyzes the carboxylation of biotin on its carrier protein (BCCP) and then the CO(2) group is transferred by the carboxyltransferase to acetyl-CoA to form malonyl-CoA. This is Acetyl-coenzyme A carboxylase carboxyl transferase subunit alpha from Neisseria meningitidis serogroup C / serotype 2a (strain ATCC 700532 / DSM 15464 / FAM18).